The chain runs to 252 residues: uncharacterized protein (252 aa).

The Clp R domain occupies 96–238; it reads FRRFTPRARN…ITTLASLTGA (143 aa). Repeat regions lie at residues 99–164 and 172–238; these read FTPR…PAVT and FSGP…LTGA.

The protein belongs to the ClpA/ClpB family. ClpC subfamily.

This is an uncharacterized protein from Mycobacterium bovis (strain ATCC BAA-935 / AF2122/97).